The chain runs to 191 residues: Cytochrome c biogenesis ATP-binding export protein CcmA (191 aa).

Residues 2 to 190 (LSLHQLQFKN…SIKSAQILRI (189 aa)) enclose the ABC transporter domain. 29 to 36 (GANGCGKS) is an ATP binding site.

This sequence belongs to the ABC transporter superfamily. CcmA exporter (TC 3.A.1.107) family. As to quaternary structure, the complex is composed of two ATP-binding proteins (CcmA) and two transmembrane proteins (CcmB).

It is found in the cell inner membrane. The enzyme catalyses heme b(in) + ATP + H2O = heme b(out) + ADP + phosphate + H(+). Part of the ABC transporter complex CcmAB involved in the biogenesis of c-type cytochromes; once thought to export heme, this seems not to be the case, but its exact role is uncertain. Responsible for energy coupling to the transport system. The sequence is that of Cytochrome c biogenesis ATP-binding export protein CcmA from Rickettsia conorii (strain ATCC VR-613 / Malish 7).